Here is a 364-residue protein sequence, read N- to C-terminus: Probable dual-specificity RNA methyltransferase RlmN (364 aa).

Glutamate 107 acts as the Proton acceptor in catalysis. Residues 113–346 (HDYGNSVCVT…ATIRREQGSD (234 aa)) enclose the Radical SAM core domain. Cysteine 120 and cysteine 351 are oxidised to a cystine. [4Fe-4S] cluster contacts are provided by cysteine 127, cysteine 131, and cysteine 134. S-adenosyl-L-methionine is bound by residues 177–178 (GE), serine 209, 232–234 (SLH), and asparagine 308. Cysteine 351 functions as the S-methylcysteine intermediate in the catalytic mechanism.

Belongs to the radical SAM superfamily. RlmN family. It depends on [4Fe-4S] cluster as a cofactor.

Its subcellular location is the cytoplasm. The catalysed reaction is adenosine(2503) in 23S rRNA + 2 reduced [2Fe-2S]-[ferredoxin] + 2 S-adenosyl-L-methionine = 2-methyladenosine(2503) in 23S rRNA + 5'-deoxyadenosine + L-methionine + 2 oxidized [2Fe-2S]-[ferredoxin] + S-adenosyl-L-homocysteine. The enzyme catalyses adenosine(37) in tRNA + 2 reduced [2Fe-2S]-[ferredoxin] + 2 S-adenosyl-L-methionine = 2-methyladenosine(37) in tRNA + 5'-deoxyadenosine + L-methionine + 2 oxidized [2Fe-2S]-[ferredoxin] + S-adenosyl-L-homocysteine. In terms of biological role, specifically methylates position 2 of adenine 2503 in 23S rRNA and position 2 of adenine 37 in tRNAs. Confers resistance to some classes of antibiotics. In Staphylococcus aureus (strain bovine RF122 / ET3-1), this protein is Probable dual-specificity RNA methyltransferase RlmN.